A 449-amino-acid polypeptide reads, in one-letter code: Allantoinase (449 aa).

Zn(2+) is bound by residues histidine 61, histidine 63, lysine 148, histidine 184, histidine 240, and aspartate 313. An N6-carboxylysine modification is found at lysine 148.

Belongs to the metallo-dependent hydrolases superfamily. Allantoinase family. In terms of assembly, homotetramer. Requires Zn(2+) as cofactor. Carboxylation allows a single lysine to coordinate two zinc ions.

The catalysed reaction is (S)-allantoin + H2O = allantoate + H(+). It functions in the pathway nitrogen metabolism; (S)-allantoin degradation; allantoate from (S)-allantoin: step 1/1. Its function is as follows. Catalyzes the conversion of allantoin (5-ureidohydantoin) to allantoic acid by hydrolytic cleavage of the five-member hydantoin ring. This chain is Allantoinase, found in Desulfitobacterium hafniense (strain Y51).